The following is a 299-amino-acid chain: Probable lipid kinase YegS (299 aa).

Residues 2–133 (AEFPASLLIL…IDMAQVNKQT (132 aa)) enclose the DAGKc domain. Residues Thr40, 66–72 (GDGTINE), and Thr95 contribute to the ATP site. Positions 215, 218, and 220 each coordinate Mg(2+). The active-site Proton acceptor is Glu271.

The protein belongs to the diacylglycerol/lipid kinase family. YegS lipid kinase subfamily. It depends on Mg(2+) as a cofactor. Ca(2+) is required as a cofactor.

The protein resides in the cytoplasm. In terms of biological role, probably phosphorylates lipids; the in vivo substrate is unknown. This Escherichia coli O9:H4 (strain HS) protein is Probable lipid kinase YegS.